Here is a 126-residue protein sequence, read N- to C-terminus: DNA-directed RNA polymerase I subunit RPA12 (126 aa).

Positions 20, 23, 38, 41, 87, and 90 each coordinate Zn(2+). Residues 20 to 41 (CSDCGSVLPLPGAQDTVTCTRC) form a C4-type zinc finger. Residues 83-123 (VDRRCPRCGHEGMAYHTRQMRSADEGQTVFYTCTNCKFQEK) form a TFIIS-type zinc finger. The Hairpin signature appears at 106 to 107 (DE). Residues cysteine 115 and cysteine 118 each contribute to the Zn(2+) site.

It belongs to the archaeal RpoM/eukaryotic RPA12/RPB9/RPC11 RNA polymerase family. Component of the RNA polymerase I (Pol I) complex consisting of 13 subunits: a ten-subunit catalytic core composed of POLR1A/RPA1, POLR1B/RPA2, POLR1C/RPAC1, POLR1D/RPAC2, POLR1H/RPA12, POLR2E/RPABC1, POLR2F/RPABC2, POLR2H/RPABC3, POLR2K/RPABC4 and POLR2L/RPABC5; a mobile stalk subunit POLR1F/RPA43 protruding from the core and additional subunits homologous to general transcription factors POLR1E/RPA49 and POLR1G/RPA34. Part of Pol I pre-initiation complex (PIC), in which Pol I core assembles with RRN3 and promoter-bound UTBF and SL1/TIF-IB complex.

The protein resides in the nucleus. The protein localises to the nucleolus. Functionally, core component of RNA polymerase I (Pol I), a DNA-dependent RNA polymerase which synthesizes ribosomal RNA precursors using the four ribonucleoside triphosphates as substrates. Can mediate Pol I proofreading of the nascent RNA transcript. Anchors into the Pol I active site to monitor transcription fidelity and cleave mis-incorporated 5'-ribonucleotides. This is DNA-directed RNA polymerase I subunit RPA12 from Macaca mulatta (Rhesus macaque).